Here is a 98-residue protein sequence, read N- to C-terminus: NADH-ubiquinone oxidoreductase chain 4L (98 aa).

3 helical membrane-spanning segments follow: residues 1 to 21 (MPII…GMLI), 29 to 49 (SLLC…LMAL), and 58 to 78 (IVPV…LALL).

The protein belongs to the complex I subunit 4L family. In terms of assembly, core subunit of respiratory chain NADH dehydrogenase (Complex I) which is composed of 45 different subunits.

Its subcellular location is the mitochondrion inner membrane. It carries out the reaction a ubiquinone + NADH + 5 H(+)(in) = a ubiquinol + NAD(+) + 4 H(+)(out). In terms of biological role, core subunit of the mitochondrial membrane respiratory chain NADH dehydrogenase (Complex I) which catalyzes electron transfer from NADH through the respiratory chain, using ubiquinone as an electron acceptor. Part of the enzyme membrane arm which is embedded in the lipid bilayer and involved in proton translocation. The chain is NADH-ubiquinone oxidoreductase chain 4L (MT-ND4L) from Semnopithecus entellus (Northern plains gray langur).